Here is a 448-residue protein sequence, read N- to C-terminus: Trigger factor (448 aa).

Positions 172–257 (GDRVTVDFVG…MKKIEWPHLP (86 aa)) constitute a PPIase FKBP-type domain.

Belongs to the FKBP-type PPIase family. Tig subfamily.

The protein resides in the cytoplasm. It carries out the reaction [protein]-peptidylproline (omega=180) = [protein]-peptidylproline (omega=0). Its function is as follows. Involved in protein export. Acts as a chaperone by maintaining the newly synthesized protein in an open conformation. Functions as a peptidyl-prolyl cis-trans isomerase. The chain is Trigger factor from Burkholderia cenocepacia (strain ATCC BAA-245 / DSM 16553 / LMG 16656 / NCTC 13227 / J2315 / CF5610) (Burkholderia cepacia (strain J2315)).